Consider the following 400-residue polypeptide: Glutamyl-tRNA reductase (400 aa).

Substrate is bound by residues 45-48, Ser-103, 108-110, and Gln-114; these read TCNR and EDQ. Cys-46 (nucleophile) is an active-site residue. An NADP(+)-binding site is contributed by 179–184; the sequence is GYGEIG.

The protein belongs to the glutamyl-tRNA reductase family. Homodimer.

The enzyme catalyses (S)-4-amino-5-oxopentanoate + tRNA(Glu) + NADP(+) = L-glutamyl-tRNA(Glu) + NADPH + H(+). The protein operates within porphyrin-containing compound metabolism; protoporphyrin-IX biosynthesis; 5-aminolevulinate from L-glutamyl-tRNA(Glu): step 1/2. Its function is as follows. Catalyzes the NADPH-dependent reduction of glutamyl-tRNA(Glu) to glutamate 1-semialdehyde (GSA). This is Glutamyl-tRNA reductase from Clostridium perfringens (strain ATCC 13124 / DSM 756 / JCM 1290 / NCIMB 6125 / NCTC 8237 / Type A).